The sequence spans 547 residues: Chaperonin GroEL (547 aa).

Residues 30 to 33 (TLGP), Lys-51, 87 to 91 (DGTTT), Gly-415, and Asp-495 each bind ATP. The tract at residues 525-547 (PDEKEAGGGAPDMGGMGGMGGMM) is disordered. The segment covering 531 to 547 (GGGAPDMGGMGGMGGMM) has biased composition (gly residues).

This sequence belongs to the chaperonin (HSP60) family. In terms of assembly, forms a cylinder of 14 subunits composed of two heptameric rings stacked back-to-back. Interacts with the co-chaperonin GroES.

It localises to the cytoplasm. It carries out the reaction ATP + H2O + a folded polypeptide = ADP + phosphate + an unfolded polypeptide.. Functionally, together with its co-chaperonin GroES, plays an essential role in assisting protein folding. The GroEL-GroES system forms a nano-cage that allows encapsulation of the non-native substrate proteins and provides a physical environment optimized to promote and accelerate protein folding. The sequence is that of Chaperonin GroEL from Chromohalobacter salexigens (strain ATCC BAA-138 / DSM 3043 / CIP 106854 / NCIMB 13768 / 1H11).